The following is a 301-amino-acid chain: ADP-ribosyl cyclase/cyclic ADP-ribose hydrolase 1 (301 aa).

The Cytoplasmic segment spans residues 1 to 21; it reads MANCEFSPVSGDKPCCRLSRR. Residues 22–43 traverse the membrane as a helical; Signal-anchor for type II membrane protein segment; sequence AQVCLGVCLLVLLILVVVVAVV. Over 44-301 the chain is Extracellular; that stretch reads LPRWRQQWSG…PEDSSCLSGI (258 aa). 3 cysteine pairs are disulfide-bonded: Cys-68-Cys-83, Cys-100-Cys-181, and Cys-161-Cys-174. An N-linked (GlcNAc...) asparagine glycan is attached at Asn-101. The active site involves Cys-120. The N-linked (GlcNAc...) asparagine glycan is linked to Asn-121. Residue Cys-202 is part of the active site. Residues Asn-210 and Asn-220 are each glycosylated (N-linked (GlcNAc...) asparagine). 2 cysteine pairs are disulfide-bonded: Cys-255/Cys-276 and Cys-288/Cys-297.

This sequence belongs to the ADP-ribosyl cyclase family. Homodimer.

The protein resides in the cell surface. The protein localises to the membrane. It carries out the reaction NAD(+) = cyclic ADP-beta-D-ribose + nicotinamide + H(+). The catalysed reaction is 2'-phospho-cyclic ADP-ribose + nicotinate = nicotinate-adenine dinucleotide phosphate. The enzyme catalyses NAD(+) + H2O = ADP-D-ribose + nicotinamide + H(+). It catalyses the reaction nicotinate + NADP(+) = nicotinate-adenine dinucleotide phosphate + nicotinamide. Its activity is regulated as follows. ATP inhibits the cADPR hydrolyzing activity. Synthesizes cyclic ADP-ribose (cADPR), a second messenger for glucose-induced insulin secretion. Synthesizes the Ca(2+) mobilizer nicotinate-adenine dinucleotide phosphate, NAADP(+), from 2'-phospho-cADPR and nicotinic acid, as well as from NADP(+) and nicotinic acid. Also has cADPR hydrolase activity. The protein is ADP-ribosyl cyclase/cyclic ADP-ribose hydrolase 1 (CD38) of Macaca fascicularis (Crab-eating macaque).